The primary structure comprises 147 residues: Peptide deformylase (147 aa).

Fe cation is bound by residues cysteine 88 and histidine 130. Glutamate 131 is a catalytic residue. Residue histidine 134 participates in Fe cation binding.

Belongs to the polypeptide deformylase family. It depends on Fe(2+) as a cofactor.

The enzyme catalyses N-terminal N-formyl-L-methionyl-[peptide] + H2O = N-terminal L-methionyl-[peptide] + formate. Removes the formyl group from the N-terminal Met of newly synthesized proteins. Requires at least a dipeptide for an efficient rate of reaction. N-terminal L-methionine is a prerequisite for activity but the enzyme has broad specificity at other positions. This is Peptide deformylase from Alkaliphilus metalliredigens (strain QYMF).